The primary structure comprises 253 residues: MPLLSSIVGLTGLLLWMGHTVGALRMPNTTLVQGRPKNTAVWPLSGLGVPRHRRKRHISARDMSALLDYHNHIRASVHPPAANMEYMVWDEQLARSAEAWATQCIWTHGPSQLMKYVGQNLSIHSGRFRSVVDLVRSWSEEKRHYSFPAPKDCTPHCPWLCSGPVCSHYTQMVWASSSRLGCAINTCSSINVWGNTWQQAVYLVCNYAIKGNWIGEAPYKAGKPCSACPPSYQGNCNSNMCFSGLKSNRLPWV.

The first 23 residues, 1–23 (MPLLSSIVGLTGLLLWMGHTVGA), serve as a signal peptide directing secretion. The propeptide occupies 24–56 (LRMPNTTLVQGRPKNTAVWPLSGLGVPRHRRKR). N-linked (GlcNAc...) asparagine glycans are attached at residues N28 and N120. The SCP domain maps to 67–207 (LDYHNHIRAS…QQAVYLVCNY (141 aa)).

Belongs to the CRISP family.

The protein resides in the secreted. Functionally, putative serine protease inhibitor. The chain is Peptidase inhibitor R3HDML (R3hdml) from Mus musculus (Mouse).